The following is a 396-amino-acid chain: Putative nickel insertion protein (396 aa).

Belongs to the LarC family.

The protein is Putative nickel insertion protein of Methanococcoides burtonii (strain DSM 6242 / NBRC 107633 / OCM 468 / ACE-M).